The chain runs to 424 residues: Serine--tRNA ligase (424 aa).

233–235 (TAE) provides a ligand contact to L-serine. 264-266 (RKE) provides a ligand contact to ATP. Glutamate 287 provides a ligand contact to L-serine. Residue 351–354 (EISS) participates in ATP binding. Position 386 (serine 386) interacts with L-serine.

Belongs to the class-II aminoacyl-tRNA synthetase family. Type-1 seryl-tRNA synthetase subfamily. In terms of assembly, homodimer. The tRNA molecule binds across the dimer.

It localises to the cytoplasm. It carries out the reaction tRNA(Ser) + L-serine + ATP = L-seryl-tRNA(Ser) + AMP + diphosphate + H(+). The catalysed reaction is tRNA(Sec) + L-serine + ATP = L-seryl-tRNA(Sec) + AMP + diphosphate + H(+). It participates in aminoacyl-tRNA biosynthesis; selenocysteinyl-tRNA(Sec) biosynthesis; L-seryl-tRNA(Sec) from L-serine and tRNA(Sec): step 1/1. In terms of biological role, catalyzes the attachment of serine to tRNA(Ser). Is also able to aminoacylate tRNA(Sec) with serine, to form the misacylated tRNA L-seryl-tRNA(Sec), which will be further converted into selenocysteinyl-tRNA(Sec). The chain is Serine--tRNA ligase from Elusimicrobium minutum (strain Pei191).